Here is an 818-residue protein sequence, read N- to C-terminus: Cation/H(+) antiporter 6A (818 aa).

A run of 13 helical transmembrane segments spans residues 51–71 (NFWE…FFIW), 88–110 (FTYM…KSWI), 123–143 (VAET…GVTM), 156–176 (SVIG…TFRY), 192–212 (LIIF…LKDL), 222–242 (IALS…FFNA), 248–268 (LYGF…ICVV), 288–308 (FYLY…NKVI), 310–330 (LFGP…YPLG), 340–360 (FNLG…VDLL), 376–396 (IYEV…VTTI), 409–429 (FALA…YTYA), and 438–458 (EVFT…PMLL).

Belongs to the monovalent cation:proton antiporter 2 (CPA2) transporter (TC 2.A.37) family. CHX (TC 2.A.37.4) subfamily. In terms of tissue distribution, preferentially expressed in pollen.

The protein resides in the membrane. May operate as a cation/H(+) antiporter. The chain is Cation/H(+) antiporter 6A (CHX6a) from Arabidopsis thaliana (Mouse-ear cress).